We begin with the raw amino-acid sequence, 346 residues long: Phosphate acyltransferase (346 aa).

This sequence belongs to the PlsX family. Homodimer. Probably interacts with PlsY.

It is found in the cytoplasm. The enzyme catalyses a fatty acyl-[ACP] + phosphate = an acyl phosphate + holo-[ACP]. It functions in the pathway lipid metabolism; phospholipid metabolism. Its function is as follows. Catalyzes the reversible formation of acyl-phosphate (acyl-PO(4)) from acyl-[acyl-carrier-protein] (acyl-ACP). This enzyme utilizes acyl-ACP as fatty acyl donor, but not acyl-CoA. In Brucella suis biovar 1 (strain 1330), this protein is Phosphate acyltransferase.